The following is a 308-amino-acid chain: Putative mitochondrial transporter UCP3 (308 aa).

Residues 1–10 lie on the Mitochondrial intermembrane side of the membrane; sequence MVGLKPPEVP. Residues 11-32 form a helical membrane-spanning segment; it reads PTTAVKLLGAGTAACFADLLTF. Solcar repeat units lie at residues 11 to 102, 111 to 202, and 211 to 296; these read PTTA…VKQL, SSIT…IKEK, and DNLP…LKRA. The Mitochondrial matrix segment spans residues 33 to 73; the sequence is PLDTAKVRLQIQGENQAARSAQYRGVLGTILTMVRNEGPRS. A helical membrane pass occupies residues 74 to 96; it reads PYNGLVAGLQRQMSFASIRIGLY. The Mitochondrial intermembrane segment spans residues 97 to 116; it reads DSVKQLYTPKGSDHSSITTR. A helical membrane pass occupies residues 117–133; sequence ILAGCTTGAMAVTCAQP. Residues 134-179 are Mitochondrial matrix-facing; the sequence is TDVVKVRFQASIHAGPRSNRKYSGTMDAYRTIAREEGVRGLWKGIL. A helical membrane pass occupies residues 180–196; it reads PNITRNAIVNCAEMVTY. The Mitochondrial intermembrane segment spans residues 197-213; sequence DVIKEKVLDYHLLTDNL. A helical membrane pass occupies residues 214–233; it reads PCHFVSAFGAGFCATVVASP. The Mitochondrial matrix portion of the chain corresponds to 234-267; it reads VDVVKTRYMNSPPGQYQNPLDCMLKMVTQEGPTA. Residues 268–290 form a helical membrane-spanning segment; sequence FYKGFTPSFLRLGSWNVVMFVSY. Residues 275-297 form a purine nucleotide binding region; sequence SFLRLGSWNVVMFVSYEQLKRAL. Over 291 to 308 the chain is Mitochondrial intermembrane; it reads EQLKRALMKVQMLRESPF.

Belongs to the mitochondrial carrier (TC 2.A.29) family. In terms of assembly, interacts with HAX1; the interaction is direct and calcium-dependent.

The protein resides in the mitochondrion inner membrane. Putative transmembrane transporter that plays a role in mitochondrial metabolism via an as yet unclear mechanism. Originally, this mitochondrial protein was thought to act as a proton transmembrane transporter from the mitochondrial intermembrane space into the matrix, causing proton leaks through the inner mitochondrial membrane, thereby uncoupling mitochondrial membrane potential generation from ATP synthesis. However, this function is controversial and uncoupling may not be the function, or at least not the main function, but rather a consequence of more conventional metabolite transporter activity. The sequence is that of Putative mitochondrial transporter UCP3 from Sus scrofa (Pig).